A 269-amino-acid polypeptide reads, in one-letter code: MPELPEVEVSRMGITPHLLNQTIQSLIFRTPKLRWVIPSELKKLQGQVIRHIGRRAKYLIIETDVGSAIVHLGMSGSLRVLDADFPAGKHDHVDLKLSNGKVLRYNDPRRFGAWLYAAPGEDHDVLGNIGPEPLTNAFDGQYMFEKAQGKRVAVKQFIMDNKIVVGVGNIYASESLFRSRILPTRATMSLSAEEWQRLVSHIKQTLQTAIEQGGTTLKDFSQADGKPGYFAQELQVYGKAGEPCPECGEAIQEQKIGQRNTFYCSYCQC.

Proline 2 functions as the Schiff-base intermediate with DNA in the catalytic mechanism. Catalysis depends on glutamate 3, which acts as the Proton donor. The active-site Proton donor; for beta-elimination activity is the lysine 57. DNA contacts are provided by histidine 90, arginine 109, and lysine 150. The FPG-type zinc finger occupies 235–269 (QVYGKAGEPCPECGEAIQEQKIGQRNTFYCSYCQC). Catalysis depends on arginine 259, which acts as the Proton donor; for delta-elimination activity.

It belongs to the FPG family. In terms of assembly, monomer. The cofactor is Zn(2+).

The catalysed reaction is Hydrolysis of DNA containing ring-opened 7-methylguanine residues, releasing 2,6-diamino-4-hydroxy-5-(N-methyl)formamidopyrimidine.. The enzyme catalyses 2'-deoxyribonucleotide-(2'-deoxyribose 5'-phosphate)-2'-deoxyribonucleotide-DNA = a 3'-end 2'-deoxyribonucleotide-(2,3-dehydro-2,3-deoxyribose 5'-phosphate)-DNA + a 5'-end 5'-phospho-2'-deoxyribonucleoside-DNA + H(+). In terms of biological role, involved in base excision repair of DNA damaged by oxidation or by mutagenic agents. Acts as a DNA glycosylase that recognizes and removes damaged bases. Has a preference for oxidized purines, such as 7,8-dihydro-8-oxoguanine (8-oxoG). Has AP (apurinic/apyrimidinic) lyase activity and introduces nicks in the DNA strand. Cleaves the DNA backbone by beta-delta elimination to generate a single-strand break at the site of the removed base with both 3'- and 5'-phosphates. The chain is Formamidopyrimidine-DNA glycosylase from Vibrio vulnificus (strain CMCP6).